The primary structure comprises 661 residues: Lateral signaling target protein 2 (661 aa).

Residues 294 to 432 (VPEDTSSTLT…SDDEITDDVQ (139 aa)) are disordered. Positions 297–310 (DTSSTLTMSDFRTN) are enriched in polar residues. Low complexity-rich tracts occupy residues 330–360 (SDST…SPHS) and 381–393 (TNSN…TESP). Positions 394–411 (ETIEEPDNVDMEESSESE) are enriched in acidic residues. The span at 412–422 (VDTHIDETRNE) shows a compositional bias: basic and acidic residues. The FYVE-type zinc finger occupies 566–626 (DEDCEQCTAC…VCNLCYVHRL (61 aa)). Residues Cys572, Cys575, Cys588, Cys591, Cys596, Cys599, Cys618, and Cys621 each contribute to the Zn(2+) site. Residues 641–650 (NGATVPSVTE) show a composition bias toward polar residues. Residues 641–661 (NGATVPSVTEQQSAQTASASS) are disordered. Residues 651 to 661 (QQSAQTASASS) are compositionally biased toward low complexity.

The protein belongs to the lst-2 family. Expressed in vulval precursor cells (VPCs).

Its function is as follows. Negative regulator of epidermal growth factor receptor (EGFR) signaling. This Caenorhabditis elegans protein is Lateral signaling target protein 2 (lst-2).